Consider the following 266-residue polypeptide: Enterotoxin type C-1 (266 aa).

The signal sequence occupies residues 1-27; that stretch reads MNKSRFISCVILIFALILVLFTPNVLA. Residues Cys120 and Cys137 are joined by a disulfide bond.

It belongs to the staphylococcal/streptococcal toxin family. Interacts with host MHC class II molecules composed of alpha/HLA-DRA and beta/HLA-DRB1 chains.

It localises to the secreted. In terms of biological role, staphylococcal enterotoxin that activates the host immune system by binding as unprocessed molecules to major histocompatibility (MHC) complex class II and T-cell receptor (TCR) molecules. In turn, this ternary complex activates a large number of T-lymphocytes initiating a systemic release of pro-inflammatory cytokines. Inhibits SEC1-mediated T-cell activation in the absence of MHC class II by competing with SEC1 for binding to the host TCR. Also causes the intoxication staphylococcal food poisoning syndrome. The protein is Enterotoxin type C-1 (entC1) of Staphylococcus aureus.